Reading from the N-terminus, the 110-residue chain is MRQVTIPLIQSKSMFCVIYRSSKRDQTYLYVEKKDDFSRVPDALMKGFGQPQLAMMLPLDGRKKLVNAELEKVKQALSEQGYYLQLPPPPEDLLKQHLSSVGQNTSHADR.

Residues 14-98 (MFCVIYRSSK…PPEDLLKQHL (85 aa)) form the YcgL domain. The interval 88 to 110 (PPPEDLLKQHLSSVGQNTSHADR) is disordered. A compositionally biased stretch (polar residues) spans 97–110 (HLSSVGQNTSHADR).

This Salmonella typhi protein is Protein YcgL.